The sequence spans 248 residues: Pyridoxine 5'-phosphate synthase (248 aa).

N9 lines the 3-amino-2-oxopropyl phosphate pocket. 11–12 (DH) lines the 1-deoxy-D-xylulose 5-phosphate pocket. R20 is a binding site for 3-amino-2-oxopropyl phosphate. The active-site Proton acceptor is the H45. Positions 47 and 52 each coordinate 1-deoxy-D-xylulose 5-phosphate. The Proton acceptor role is filled by E72. T102 serves as a coordination point for 1-deoxy-D-xylulose 5-phosphate. Residue H193 is the Proton donor of the active site. 3-amino-2-oxopropyl phosphate is bound by residues G194 and 215–216 (GH).

It belongs to the PNP synthase family. Homooctamer; tetramer of dimers.

It is found in the cytoplasm. The catalysed reaction is 3-amino-2-oxopropyl phosphate + 1-deoxy-D-xylulose 5-phosphate = pyridoxine 5'-phosphate + phosphate + 2 H2O + H(+). It functions in the pathway cofactor biosynthesis; pyridoxine 5'-phosphate biosynthesis; pyridoxine 5'-phosphate from D-erythrose 4-phosphate: step 5/5. In terms of biological role, catalyzes the complicated ring closure reaction between the two acyclic compounds 1-deoxy-D-xylulose-5-phosphate (DXP) and 3-amino-2-oxopropyl phosphate (1-amino-acetone-3-phosphate or AAP) to form pyridoxine 5'-phosphate (PNP) and inorganic phosphate. In Hydrogenovibrio crunogenus (strain DSM 25203 / XCL-2) (Thiomicrospira crunogena), this protein is Pyridoxine 5'-phosphate synthase.